Reading from the N-terminus, the 313-residue chain is Porphobilinogen deaminase (313 aa).

Position 243 is an S-(dipyrrolylmethanemethyl)cysteine (Cys243).

It belongs to the HMBS family. Monomer. Dipyrromethane serves as cofactor.

The catalysed reaction is 4 porphobilinogen + H2O = hydroxymethylbilane + 4 NH4(+). It participates in porphyrin-containing compound metabolism; protoporphyrin-IX biosynthesis; coproporphyrinogen-III from 5-aminolevulinate: step 2/4. Its function is as follows. Tetrapolymerization of the monopyrrole PBG into the hydroxymethylbilane pre-uroporphyrinogen in several discrete steps. This chain is Porphobilinogen deaminase, found in Bordetella petrii (strain ATCC BAA-461 / DSM 12804 / CCUG 43448).